The following is a 1280-amino-acid chain: Pullulanase A (1280 aa).

Positions 1–44 (MRKTPSHTEKKMVYSIRSLKNGTGSVLIGASLVLLAMATPTISS) are cleaved as a signal peptide. The disordered stretch occupies residues 42–132 (ISSDESTPTT…VTTETKAEEP (91 aa)). A compositionally biased stretch (low complexity) spans 48-61 (TPTTNEPNNRNTTT). Residues 79–90 (DISSPGNANASL) show a composition bias toward polar residues. The span at 115 to 126 (EPTTSTSPVTTE) shows a compositional bias: low complexity. Residues 156–158 (WTW), Trp-168, Asp-214, 263–265 (WYW), Trp-276, Lys-318, and Asn-323 contribute to the substrate site. Ser-661 and Tyr-663 together coordinate Ca(2+). Substrate contacts are provided by residues 667-668 (YD) and Phe-743. Asp-778 acts as the Nucleophile in catalysis. Residue Glu-807 is the Proton donor of the active site. Trp-809 provides a ligand contact to substrate. The Ca(2+) site is built by Met-828, Thr-831, and Asp-832. Residues Asp-839, Arg-842, and Tyr-849 each contribute to the substrate site. Asp-882 and Asp-886 together coordinate Ca(2+). Residues Asn-896, Lys-969, and 989 to 991 (DSY) contribute to the substrate site. Asp-992 serves as a coordination point for Ca(2+). The interval 1140 to 1248 (VSQNGTSHES…TPDKQAELPN (109 aa)) is disordered. Residues 1149–1196 (STAEEKPDSTPSKPEHQNEASHPAHQDPAPEARPDSTKPDAKVADAEN) are compositionally biased toward basic and acidic residues. Low complexity predominate over residues 1205 to 1218 (SQAEQPAQEAQASS). The LPXTG sorting signal signature appears at 1246–1250 (LPNTG). Thr-1249 carries the pentaglycyl murein peptidoglycan amidated threonine modification. A propeptide spans 1250 to 1280 (GIKNENKLLFAGISLLALLGLGFLLKNKKEN) (removed by sortase).

This sequence belongs to the glycosyl hydrolase 13 family.

The protein localises to the secreted. It is found in the cell wall. The protein resides in the cell surface. It carries out the reaction Hydrolysis of (1-&gt;6)-alpha-D-glucosidic linkages in pullulan, amylopectin and glycogen, and in the alpha- and beta-limit dextrins of amylopectin and glycogen.. With respect to regulation, inhibited by 4-O-alpha-D-glucopyranosylmoranoline (G1M). Its function is as follows. Virulence factor. Involved in the degradation of glycogen of the mammalian host cells. Hydrolyzes the alpha-1,6-branchpoints of glycogen. Hydrolyzes pullulan. Does not hydrolyze dextran. Binds to mouse lung alveolar type II cells that are rich in glycogen stores. Is an alpha-glucan-specific carbohydrate-binding protein, which binds to amylose (pure alpha-(1,4)-linked glucose), amylopectin (alpha-(1,4)-linked glucose with alpha-(1,6) branch points), pullulan (linear polymer of mixed alpha-(1,4)- and alpha-(1,6)-linked glucose) and glycogen (similar to amylopectin with more frequent alpha-(1,6) branch points) in vitro. Does not bind to dextran (a linear polymer of alpha-(1,6)-linked glucose). The sequence is that of Pullulanase A from Streptococcus pneumoniae serotype 4 (strain ATCC BAA-334 / TIGR4).